Consider the following 78-residue polypeptide: Large ribosomal subunit protein bL28 (78 aa).

It belongs to the bacterial ribosomal protein bL28 family.

This Synechococcus sp. (strain JA-2-3B'a(2-13)) (Cyanobacteria bacterium Yellowstone B-Prime) protein is Large ribosomal subunit protein bL28.